The sequence spans 134 residues: Small ribosomal subunit protein uS8c (134 aa).

The protein belongs to the universal ribosomal protein uS8 family. As to quaternary structure, part of the 30S ribosomal subunit.

The protein localises to the plastid. It localises to the chloroplast. Its function is as follows. One of the primary rRNA binding proteins, it binds directly to 16S rRNA central domain where it helps coordinate assembly of the platform of the 30S subunit. The sequence is that of Small ribosomal subunit protein uS8c (rps8) from Nicotiana tabacum (Common tobacco).